We begin with the raw amino-acid sequence, 83 residues long: Pigment-dispersing hormone peptides (83 aa).

The first 24 residues, 1 to 24, serve as a signal peptide directing secretion; that stretch reads MRFIILGVLFIAVASMILSNGVMA. An Alanine amide modification is found at alanine 80.

It belongs to the arthropod PDH family. In terms of tissue distribution, strongly expressed in eyestalk tissue and cerebral ganglia (at protein level).

It is found in the secreted. Its function is as follows. The pigment-dispersing hormone causes the migration of the distal retinal pigment into the proximal end of the pigment chromatophore cells and thus decreases the amount of light entering the retinulas. May also function as a neurotransmitter and/or neuromodulator. This is Pigment-dispersing hormone peptides from Eurydice pulchra (Speckled sea louse).